The primary structure comprises 1866 residues: RNA1 polyprotein (1866 aa).

The 172-residue stretch at 462–633 folds into the SF3 helicase domain; the sequence is LKGINDLEQL…KAYDAANFAS (172 aa). 494–501 contacts ATP; the sequence is GKSRTGKS. Residues 897–917 form a helical membrane-spanning segment; it reads LVGSGNGPVLMGVAAGAFSAE. S920 carries the post-translational modification O-(5'-phospho-RNA)-serine. In terms of domain architecture, Peptidase C3 spans 945–1150; that stretch reads DAQMSLDQSS…CASLLPPLEP (206 aa). Residues H987, E1023, and C1113 each act as for picornain 3C-like protease activity in the active site. One can recognise a RdRp catalytic domain in the interval 1429 to 1559; the sequence is NDVLCCDYSS…SVNAVVTPYF (131 aa).

Specific enzymatic cleavages by picornain 3C-like protease in vivo yield mature proteins. Picornain 3C-like protease is autocatalytically processed. Post-translationally, uridylylated by the polymerase and is covalently linked to the 5'-end of genomic RNA. This uridylylated form acts as a nucleotide-peptide primer for the polymerase.

It localises to the host membrane. The protein localises to the host cytoplasm. Its subcellular location is the host perinuclear region. It is found in the host endoplasmic reticulum. It carries out the reaction RNA(n) + a ribonucleoside 5'-triphosphate = RNA(n+1) + diphosphate. Thiol protease that cleaves the RNA1 and RNA2 polyproteins. Its function is as follows. Plays a role in RNA replication. It is covalently linked to the 5'terminus of both viral single-stranded RNA1 and RNA2 molecules. Functionally, down-regulates the RNA1 polyprotein processing and enhances trans-cleavage of RNA2 polyproteins. The protease cofactor and the putative helicase seem to target the replication complexes to ER membranes. Their physical association causes the membrane rearrangement of host ER that may result in formation of the small membranous vesicles that are the site of viral RNA synthesis. In terms of biological role, the protease cofactor and the putative helicase seem to target the replication complexes to ER membranes. Their physical association causes the membrane rearrangement of host ER that may result in formation of the small membranous vesicles that are the site of viral RNA synthesis. Replicates the viral genome. The sequence is that of RNA1 polyprotein from Cajanus cajan (Pigeon pea).